The following is a 260-amino-acid chain: Thiazole synthase (260 aa).

Lys-102 acts as the Schiff-base intermediate with DXP in catalysis. Residues Gly-163, 189-190, and 211-212 contribute to the 1-deoxy-D-xylulose 5-phosphate site; these read AG and NT.

It belongs to the ThiG family. Homotetramer. Forms heterodimers with either ThiH or ThiS.

The protein localises to the cytoplasm. The catalysed reaction is [ThiS sulfur-carrier protein]-C-terminal-Gly-aminoethanethioate + 2-iminoacetate + 1-deoxy-D-xylulose 5-phosphate = [ThiS sulfur-carrier protein]-C-terminal Gly-Gly + 2-[(2R,5Z)-2-carboxy-4-methylthiazol-5(2H)-ylidene]ethyl phosphate + 2 H2O + H(+). It participates in cofactor biosynthesis; thiamine diphosphate biosynthesis. In terms of biological role, catalyzes the rearrangement of 1-deoxy-D-xylulose 5-phosphate (DXP) to produce the thiazole phosphate moiety of thiamine. Sulfur is provided by the thiocarboxylate moiety of the carrier protein ThiS. In vitro, sulfur can be provided by H(2)S. This Geotalea uraniireducens (strain Rf4) (Geobacter uraniireducens) protein is Thiazole synthase.